Reading from the N-terminus, the 352-residue chain is tRNA N6-adenosine threonylcarbamoyltransferase (352 aa).

His-109 and His-113 together coordinate Fe cation. Substrate contacts are provided by residues 136–140 (TVSGG), Asp-169, Gly-182, Asp-186, and Asn-284. Asp-312 is a Fe cation binding site.

The protein belongs to the KAE1 / TsaD family. The cofactor is Fe(2+).

It localises to the cytoplasm. The catalysed reaction is L-threonylcarbamoyladenylate + adenosine(37) in tRNA = N(6)-L-threonylcarbamoyladenosine(37) in tRNA + AMP + H(+). Functionally, required for the formation of a threonylcarbamoyl group on adenosine at position 37 (t(6)A37) in tRNAs that read codons beginning with adenine. Is involved in the transfer of the threonylcarbamoyl moiety of threonylcarbamoyl-AMP (TC-AMP) to the N6 group of A37, together with TsaE and TsaB. TsaD likely plays a direct catalytic role in this reaction. The protein is tRNA N6-adenosine threonylcarbamoyltransferase of Chloroherpeton thalassium (strain ATCC 35110 / GB-78).